The sequence spans 794 residues: Protocadherin beta-6 (794 aa).

The first 27 residues, 1–27 (MMQTKVQNKKRQVAFFILLMLWGEVGS), serve as a signal peptide directing secretion. At 28–688 (ESIQYSVLEE…AQADSLTVYL (661 aa)) the chain is on the extracellular side. Cadherin domains are found at residues 34 to 132 (VLEE…APEF), 137 to 241 (MLLK…VPEF), 246 to 345 (YEAQ…APEL), 350 to 449 (FISL…APAF), and 454 to 559 (YTLF…SPFV). An N-linked (GlcNAc...) asparagine glycan is attached at N46. C95 and C101 are disulfide-bonded. The N-linked (GlcNAc...) asparagine glycan is linked to N183. A glycan (N-linked (GlcNAc...) asparagine) is linked at N416. An N-linked (GlcNAc...) asparagine glycan is attached at N565. One can recognise a Cadherin 6 domain in the interval 566 to 669 (GSAPCTELVP…LVDGFSQPYL (104 aa)). A helical transmembrane segment spans residues 689 to 709 (VVALASVSSLFLFSVLLFVAV). Topologically, residues 710–794 (RLCRRSRAAS…PTSRNSFPFS (85 aa)) are cytoplasmic. Positions 773-794 (PPQGTEREMEETPTSRNSFPFS) are disordered. Positions 784–794 (TPTSRNSFPFS) are enriched in polar residues.

In terms of assembly, forms homodimers in trans (molecules expressed by two different cells). Forms promiscuous heterodimers in cis (at the plasma membrane of the same cell) with other protocadherins.

The protein localises to the cell membrane. In terms of biological role, calcium-dependent cell-adhesion protein involved in cells self-recognition and non-self discrimination. Thereby, it is involved in the establishment and maintenance of specific neuronal connections in the brain. The protein is Protocadherin beta-6 of Homo sapiens (Human).